The following is a 283-amino-acid chain: Acetylglutamate kinase (283 aa).

Residues 63–64, R85, and N178 each bind substrate; that span reads GG.

Belongs to the acetylglutamate kinase family. ArgB subfamily.

Its subcellular location is the cytoplasm. It catalyses the reaction N-acetyl-L-glutamate + ATP = N-acetyl-L-glutamyl 5-phosphate + ADP. The protein operates within amino-acid biosynthesis; L-arginine biosynthesis; N(2)-acetyl-L-ornithine from L-glutamate: step 2/4. Catalyzes the ATP-dependent phosphorylation of N-acetyl-L-glutamate. The polypeptide is Acetylglutamate kinase (Prochlorococcus marinus (strain MIT 9301)).